The sequence spans 253 residues: HTH-type transcriptional regulator YdeO (253 aa).

The HTH araC/xylS-type domain occupies glycine 137–glutamate 233. DNA-binding regions (H-T-H motif) lie at residues lysine 154–glutamine 175 and valine 200–phenylalanine 223.

Its function is as follows. Induces the expression of gadE and mdtEF. Could also regulate the expression of other genes involved in acid resistance. This chain is HTH-type transcriptional regulator YdeO, found in Escherichia coli O157:H7.